Here is a 361-residue protein sequence, read N- to C-terminus: MKKNLMLIFGGVSFEHEISCKSAYSIYLALLDLNKYNIYPVYIDKCTGVWYLLDSVSDPPKPINTDVLPIVSLLPGFGIFSNNKNLEIDVVFPVVHGRTGEDGAIQGVLKVMDIPCVGAGIIGSAISSNKYFCKLLLKSFDIPLVPFIGFRQHDYFLDKEEIKKNVKEVLGYPVIVKPAVLGSSIGINVAYSENQIESFIKEALKYDLTIVIEKFIEAREIECSIIGNEKMKIFSPGEVVVQDFIFYDYDAKYSVIPGNSIIFNIPAHLETNQLLSIKEYAFLAYKNLELRGMARVDFFVEKKSGTIYLNEINTIPGFTDISMFAKMCSNDGLQFKDLVDNLIDYAFQSYINRKKRIDFEN.

Residues 134 to 344 form the ATP-grasp domain; it reads KLLLKSFDIP…FKDLVDNLID (211 aa). Residue 167–222 participates in ATP binding; it reads KEVLGYPVIVKPAVLGSSIGINVAYSENQIESFIKEALKYDLTIVIEKFIEAREIE. Positions 297, 311, and 313 each coordinate Mg(2+).

This sequence belongs to the D-alanine--D-alanine ligase family. The cofactor is Mg(2+). Requires Mn(2+) as cofactor.

It localises to the cytoplasm. The enzyme catalyses 2 D-alanine + ATP = D-alanyl-D-alanine + ADP + phosphate + H(+). The protein operates within cell wall biogenesis; peptidoglycan biosynthesis. Its function is as follows. Cell wall formation. The protein is D-alanine--D-alanine ligase of Borreliella burgdorferi (strain ZS7) (Borrelia burgdorferi).